Here is a 189-residue protein sequence, read N- to C-terminus: Peptide deformylase (189 aa).

Residues cysteine 98 and histidine 140 each contribute to the Fe cation site. The active site involves glutamate 141. Fe cation is bound at residue histidine 144.

It belongs to the polypeptide deformylase family. It depends on Fe(2+) as a cofactor.

The catalysed reaction is N-terminal N-formyl-L-methionyl-[peptide] + H2O = N-terminal L-methionyl-[peptide] + formate. Removes the formyl group from the N-terminal Met of newly synthesized proteins. Requires at least a dipeptide for an efficient rate of reaction. N-terminal L-methionine is a prerequisite for activity but the enzyme has broad specificity at other positions. The protein is Peptide deformylase of Porphyromonas gingivalis (strain ATCC 33277 / DSM 20709 / CIP 103683 / JCM 12257 / NCTC 11834 / 2561).